Here is a 355-residue protein sequence, read N- to C-terminus: Natterin-1 (355 aa).

Residues 1 to 18 (MIPSVLLVTLLLLSWTSA) form the signal peptide. Residues 19–27 (EKDLKVRVA) constitute a propeptide that is removed on maturation.

This sequence belongs to the natterin family. Contains 4 disulfide bonds. As to expression, expressed by the venom gland.

Its subcellular location is the secreted. Inhibited by tissue-kallikrein inhibitor TKI and trasylol. Plasma kallikrein inhibitor PKSI527 and classical inhibitors of serine-, metallo-, thiol- or aspartate-peptidases evokes a minor inhibition of the peptide digestion. Its function is as follows. Shows nociceptive, edema-inducing and kininogenase activity with release of kallidin from low molecular weight kininogen. The cleavage occurs at Met-Lys bonds. The sequence is that of Natterin-1 from Thalassophryne nattereri (Copper Joe toadfish).